We begin with the raw amino-acid sequence, 290 residues long: Pyridoxal 5'-phosphate synthase subunit PdxS (290 aa).

Aspartate 22 contacts D-ribose 5-phosphate. The active-site Schiff-base intermediate with D-ribose 5-phosphate is lysine 79. Residue glycine 151 participates in D-ribose 5-phosphate binding. A D-glyceraldehyde 3-phosphate-binding site is contributed by arginine 163. Residues glycine 212 and 233–234 contribute to the D-ribose 5-phosphate site; that span reads GS.

Belongs to the PdxS/SNZ family. In the presence of PdxT, forms a dodecamer of heterodimers.

It catalyses the reaction aldehydo-D-ribose 5-phosphate + D-glyceraldehyde 3-phosphate + L-glutamine = pyridoxal 5'-phosphate + L-glutamate + phosphate + 3 H2O + H(+). The protein operates within cofactor biosynthesis; pyridoxal 5'-phosphate biosynthesis. Catalyzes the formation of pyridoxal 5'-phosphate from ribose 5-phosphate (RBP), glyceraldehyde 3-phosphate (G3P) and ammonia. The ammonia is provided by the PdxT subunit. Can also use ribulose 5-phosphate and dihydroxyacetone phosphate as substrates, resulting from enzyme-catalyzed isomerization of RBP and G3P, respectively. The chain is Pyridoxal 5'-phosphate synthase subunit PdxS from Clostridium botulinum (strain Loch Maree / Type A3).